Reading from the N-terminus, the 168-residue chain is MIVEGKVLKFGDKIDTDIIIPARYLKYTDPQYLAQHAMEPLDPEFYKKASAGVILVAGKVFGMGSSREQAAIALKAAGVRAIIAESFARIFYRNAINNGLPAIVLPGVTQLINEGDYVKINVETGEIIVNNQKVYKGRGITGMPLKILESGGLLDYLKKVSVQNQGGN.

This sequence belongs to the LeuD family. LeuD type 2 subfamily. As to quaternary structure, heterodimer of LeuC and LeuD.

The catalysed reaction is (2R,3S)-3-isopropylmalate = (2S)-2-isopropylmalate. The protein operates within amino-acid biosynthesis; L-leucine biosynthesis; L-leucine from 3-methyl-2-oxobutanoate: step 2/4. In terms of biological role, catalyzes the isomerization between 2-isopropylmalate and 3-isopropylmalate, via the formation of 2-isopropylmaleate. The polypeptide is 3-isopropylmalate dehydratase small subunit (leuD) (Sulfurisphaera tokodaii (strain DSM 16993 / JCM 10545 / NBRC 100140 / 7) (Sulfolobus tokodaii)).